The sequence spans 80 residues: MKMSVTFLLILMILPLFTGEWQSGSRLSALKKRLLEKRLLQKRFCTEIGKDCGTSWECCEDCCIHGTCSHESNCANFKLR.

The N-terminal stretch at 1-19 is a signal peptide; sequence MKMSVTFLLILMILPLFTG. Positions 20–41 are excised as a propeptide; that stretch reads EWQSGSRLSALKKRLLEKRLLQ. 4 disulfide bridges follow: Cys45–Cys59, Cys52–Cys63, Cys58–Cys68, and Cys62–Cys74.

The protein belongs to the conotoxin I1 superfamily. In terms of tissue distribution, expressed by the venom duct.

It localises to the secreted. The sequence is that of Conotoxin Cl11.2 from Californiconus californicus (California cone).